A 75-amino-acid polypeptide reads, in one-letter code: Exodeoxyribonuclease 7 small subunit (75 aa).

The protein belongs to the XseB family. As to quaternary structure, heterooligomer composed of large and small subunits.

It is found in the cytoplasm. The catalysed reaction is Exonucleolytic cleavage in either 5'- to 3'- or 3'- to 5'-direction to yield nucleoside 5'-phosphates.. Its function is as follows. Bidirectionally degrades single-stranded DNA into large acid-insoluble oligonucleotides, which are then degraded further into small acid-soluble oligonucleotides. The protein is Exodeoxyribonuclease 7 small subunit of Chlamydia pneumoniae (Chlamydophila pneumoniae).